Here is a 327-residue protein sequence, read N- to C-terminus: FERM domain-containing protein 6 (327 aa).

Positions 16 to 320 (RRVCIFLPND…NSHRLYMNLQ (305 aa)) constitute an FERM domain.

It localises to the cytoplasm. The protein resides in the cell membrane. This chain is FERM domain-containing protein 6 (Frmd6), found in Rattus norvegicus (Rat).